The following is a 101-amino-acid chain: Integration host factor subunit alpha (101 aa).

It belongs to the bacterial histone-like protein family. In terms of assembly, heterodimer of an alpha and a beta chain.

Its function is as follows. This protein is one of the two subunits of integration host factor, a specific DNA-binding protein that functions in genetic recombination as well as in transcriptional and translational control. The protein is Integration host factor subunit alpha of Maricaulis maris (strain MCS10) (Caulobacter maris).